The sequence spans 394 residues: NAD(P)H-quinone oxidoreductase subunit H (394 aa).

It belongs to the complex I 49 kDa subunit family. In terms of assembly, NDH-1 can be composed of about 15 different subunits; different subcomplexes with different compositions have been identified which probably have different functions.

It localises to the cellular thylakoid membrane. It catalyses the reaction a plastoquinone + NADH + (n+1) H(+)(in) = a plastoquinol + NAD(+) + n H(+)(out). The catalysed reaction is a plastoquinone + NADPH + (n+1) H(+)(in) = a plastoquinol + NADP(+) + n H(+)(out). Its function is as follows. NDH-1 shuttles electrons from an unknown electron donor, via FMN and iron-sulfur (Fe-S) centers, to quinones in the respiratory and/or the photosynthetic chain. The immediate electron acceptor for the enzyme in this species is believed to be plastoquinone. Couples the redox reaction to proton translocation, and thus conserves the redox energy in a proton gradient. Cyanobacterial NDH-1 also plays a role in inorganic carbon-concentration. This chain is NAD(P)H-quinone oxidoreductase subunit H, found in Picosynechococcus sp. (strain ATCC 27264 / PCC 7002 / PR-6) (Agmenellum quadruplicatum).